A 552-amino-acid chain; its full sequence is Phosphoglucomutase (552 aa).

S135 (phosphoserine intermediate) is an active-site residue. Residues S135, D289, D291, and D293 each contribute to the Mg(2+) site.

Belongs to the phosphohexose mutase family. Requires Mg(2+) as cofactor.

It carries out the reaction alpha-D-glucose 1-phosphate = alpha-D-glucose 6-phosphate. The protein operates within glycolipid metabolism; diglucosyl-diacylglycerol biosynthesis. Functionally, catalyzes the interconversion between glucose-6-phosphate and alpha-glucose-1-phosphate. This is the first step in the biosynthesis of diglucosyl-diacylglycerol (Glc2-DAG), i.e. a glycolipid found in the membrane, which is also used as a membrane anchor for lipoteichoic acid (LTA). This chain is Phosphoglucomutase (pgcA), found in Staphylococcus saprophyticus subsp. saprophyticus (strain ATCC 15305 / DSM 20229 / NCIMB 8711 / NCTC 7292 / S-41).